The following is a 94-amino-acid chain: Large ribosomal subunit protein bL25 (94 aa).

It belongs to the bacterial ribosomal protein bL25 family. In terms of assembly, part of the 50S ribosomal subunit; part of the 5S rRNA/L5/L18/L25 subcomplex. Contacts the 5S rRNA. Binds to the 5S rRNA independently of L5 and L18.

In terms of biological role, this is one of the proteins that binds to the 5S RNA in the ribosome where it forms part of the central protuberance. The chain is Large ribosomal subunit protein bL25 from Klebsiella pneumoniae (strain 342).